The chain runs to 3414 residues: Genome polyprotein (3414 aa).

The segment at 1–27 (MAGKAILKGKGGGPPRRVSKETAKKTR) is disordered. The Cytoplasmic portion of the chain corresponds to 1–98 (MAGKAILKGK…LQKRGKRRST (98 aa)). The propeptide at 98 to 116 (TTDWTGWLLVAMLLSIALA) is ER anchor for the capsid protein C, removed in mature form by serine protease NS3. The chain crosses the membrane as a helical span at residues 99–119 (TDWTGWLLVAMLLSIALAATV). Over 120 to 242 (RKEGDGTTVI…HLTRVEGWVW (123 aa)) the chain is Extracellular. An N-linked (GlcNAc...) asparagine; by host glycan is attached at Asn-144. A helical membrane pass occupies residues 243-260 (KNKSLTLAVVVIVWMTVE). Residue Ser-261 is a topological domain, cytoplasmic. The helical transmembrane segment at 262–280 (AVTRIVIVSALLCLAPAYA) threads the bilayer. Over 281–727 (SRCTHLENRD…HTVLGGAFNS (447 aa)) the chain is Extracellular. Cystine bridges form between Cys-283/Cys-310, Cys-340/Cys-396, Cys-340/Cys-401, Cys-354/Cys-385, Cys-372/Cys-396, and Cys-372/Cys-401. Residues 378–391 (DRGWGNHCGLFGKG) form a fusion peptide region. N-linked (GlcNAc...) asparagine; by host glycosylation occurs at Asn-434. Intrachain disulfides connect Cys-466–Cys-570 and Cys-587–Cys-618. A helical transmembrane segment spans residues 728–748 (VFGGVGFLPRILLGISLAWLG). Topologically, residues 749–755 (LNMRNPT) are cytoplasmic. Residues 756–776 (MSMSFLLAGGLVLTMTLGVGA) form a helical membrane-spanning segment. Residues 777-1132 (DVGCAVDTER…RSMVVADNGE (356 aa)) lie on the Extracellular side of the membrane. Intrachain disulfides connect Cys-780-Cys-791, Cys-831-Cys-920, Cys-955-Cys-1000, Cys-1057-Cys-1106, Cys-1068-Cys-1090, and Cys-1089-Cys-1093. 3 N-linked (GlcNAc...) asparagine; by host glycosylation sites follow: Asn-861, Asn-983, and Asn-999. Residues 1133-1153 (LLSEGGIPGIVAVFVVLEYII) form a helical membrane-spanning segment. At 1154–1158 (RKRPS) the chain is on the cytoplasmic side. The helical transmembrane segment at 1159-1179 (AGLTVVWGGVVVLALLVTGMV) threads the bilayer. Residues 1180 to 1187 (TLQSMLRY) are Lumenal-facing. A helical transmembrane segment spans residues 1188 to 1208 (VIAVGVTFHLELGPEIVALML). Residues 1209 to 1236 (LQAVFELRVGLLGAFVLRRSLTTREVVT) lie on the Cytoplasmic side of the membrane. Residues 1237 to 1257 (IYFLLLVLELGLPSANLEALW) traverse the membrane as a helical segment. Residues 1258 to 1293 (GWADALAMGAMIFRACTAEGKTGLGLLLVALMTQQN) are Lumenal-facing. Residues 1294 to 1314 (AVIVHQGLVIFLSVASACSVW) traverse the membrane as a helical segment. The Cytoplasmic portion of the chain corresponds to 1315–1363 (KLLRGQREQKGLSWIVPLAGRLGGKGSGIRLLAFWELASRRDRRSFSEP). A helical transmembrane segment spans residues 1364–1381 (LTVVGVMLTLASGMMRHT). Position 1382 (Ser-1382) is a topological domain, lumenal. A helical membrane pass occupies residues 1383-1403 (QEALCALAAASFLLLMLVLGT). Over 1404-1454 (RKMQLVAEWSGCVEWHPDLADEGGEISLRVRQDALGNFHLTELEKEERMMA) the chain is Cytoplasmic. Residues 1410-1449 (AEWSGCVEWHPDLADEGGEISLRVRQDALGNFHLTELEKE) are interacts with and activates NS3 protease. An intramembrane region (helical) is located at residues 1455–1475 (FWLLAGLTASALHWTGILVVM). The Cytoplasmic segment spans residues 1476-2160 (GLWTMSEMLR…KMAERDAPEA (685 aa)). The region spanning 1490-1669 (SDLVFSGQSG…EVEKSRPNLP (180 aa)) is the Peptidase S7 domain. Active-site charge relay system; for serine protease NS3 activity residues include His-1543, Asp-1567, and Ser-1627. Positions 1675 to 1831 (TGWTSKGTIT…ESNGAITSEE (157 aa)) constitute a Helicase ATP-binding domain. 1688–1695 (MHPGSGKT) lines the ATP pocket. Positions 1779 to 1782 (DEAH) match the DEAH box motif. The region spanning 1841–2000 (DGFDWITEYE…TLRGPVATFY (160 aa)) is the Helicase C-terminal domain. N6-acetyllysine; by host is present on Lys-1883. The helical transmembrane segment at 2161 to 2181 (FLTMVEMVVLGLATLGAVWCL) threads the bilayer. The Lumenal portion of the chain corresponds to 2182-2189 (VLRTSISR). An intramembrane region (helical) is located at residues 2190-2210 (MMLGTMVLLVSLALLWAGGVG). A topological domain (lumenal) is located at residue Tyr-2211. Residues 2212–2232 (GSMAGVALVFYTLLTVLQPEA) form a helical membrane-spanning segment. Topologically, residues 2233–2244 (GKQRSSDDNKLA) are cytoplasmic. Residues 2245–2265 (YFLLTLCSLAGLVAANEMGFL) form a helical membrane-spanning segment. Residues 2266-2299 (EKTKADLSAVLWSEREEPRVWSEWTNIDIQPAKS) are Lumenal-facing. An intramembrane region (helical) is located at residues 2300-2320 (WGTYVLVVSLFTPYIIHQLQT). The Lumenal segment spans residues 2321-2343 (RIQQLVNSAVASGAQAMRDLGGG). The helical intramembrane region spans 2344 to 2364 (TPFFGVAGHVLTLGVVSLVGA). Over 2365 to 2368 (TPTS) the chain is Lumenal. A helical transmembrane segment spans residues 2369-2389 (LVVGVGLAAFHLAIVVSGLEA). Residues 2390 to 2432 (ELTQRAHKVFFSAMVRNPMVDGDVINPFGDGEVKPALYERKMS) are Cytoplasmic-facing. A helical transmembrane segment spans residues 2433–2453 (LILAMILCFMSVVLNRTVPAV). Residues 2454–2477 (TEASAVGLAAAGQLIRPEADTLWT) are Lumenal-facing. The helical transmembrane segment at 2478 to 2498 (MPVACGLSGVVRGSLWGFLPL) threads the bilayer. Over 2499–3414 (GHRLWLRTSG…WELKVESSII (916 aa)) the chain is Cytoplasmic. Positions 2512-2776 (GGSEGDTLGD…EMDLGVGTRC (265 aa)) constitute an mRNA cap 0-1 NS5-type MT domain. An S-adenosyl-L-methionine-binding site is contributed by Ser-2567. Phosphoserine is present on Ser-2567. The For 2'-O-MTase activity role is filled by Lys-2572. S-adenosyl-L-methionine contacts are provided by Gly-2597, Trp-2598, Thr-2615, Ile-2616, and Val-2643. Residue Asp-2657 is the For 2'-O-MTase activity of the active site. Ile-2658 contributes to the S-adenosyl-L-methionine binding site. Active-site for 2'-O-MTase activity residues include Lys-2694 and Glu-2730. The interval 2730–2734 (EMYYS) is interaction with host SCRIB. Tyr-2732 contributes to the S-adenosyl-L-methionine binding site. Glu-2950, His-2954, Cys-2959, and Cys-2962 together coordinate Zn(2+). Residues 3040-3189 (GLFYADDTAG…RPIDDRFSKA (150 aa)) enclose the RdRp catalytic domain. Zn(2+) contacts are provided by His-3224, Cys-3240, and Cys-3359.

It in the N-terminal section; belongs to the class I-like SAM-binding methyltransferase superfamily. mRNA cap 0-1 NS5-type methyltransferase family. As to quaternary structure, homodimer. In terms of assembly, forms heterodimers with envelope protein E in the endoplasmic reticulum and Golgi. Homodimer; in the endoplasmic reticulum and Golgi. As to quaternary structure, forms homodimers as well as homohexamers. NS1 may interact with NS4A. In terms of assembly, forms a heterodimer with serine protease NS3. May form homooligomers. Forms a heterodimer with NS2B. Interacts with NS4B. Interacts with unphosphorylated RNA-directed RNA polymerase NS5; this interaction stimulates RNA-directed RNA polymerase NS5 guanylyltransferase activity. As to quaternary structure, interacts with serine protease NS3. In terms of assembly, interacts with host STAT2; this interaction inhibits the phosphorylation of the latter, and, when all viral proteins are present (polyprotein), targets STAT2 for degradation. In terms of processing, specific enzymatic cleavages in vivo yield mature proteins. Cleavages in the lumen of endoplasmic reticulum are performed by host signal peptidase, whereas cleavages in the cytoplasmic side are performed by serine protease NS3. Signal cleavage at the 2K-4B site requires a prior NS3 protease-mediated cleavage at the 4A-2K site. Post-translationally, cleaved in post-Golgi vesicles by a host furin, releasing the mature small envelope protein M, and peptide pr. This cleavage is incomplete as up to 30% of viral particles still carry uncleaved prM. N-glycosylated. In terms of processing, N-glycosylated. The excreted form is glycosylated and this is required for efficient secretion of the protein from infected cells. Post-translationally, acetylated by host KAT5. Acetylation modulates NS3 RNA-binding and unwinding activities and plays an important positive role for viral replication. Phosphorylated on serines residues. This phosphorylation may trigger NS5 nuclear localization.

The protein resides in the virion. It is found in the host nucleus. The protein localises to the host cytoplasm. Its subcellular location is the host perinuclear region. It localises to the secreted. The protein resides in the virion membrane. It is found in the host endoplasmic reticulum membrane. The catalysed reaction is Selective hydrolysis of -Xaa-Xaa-|-Yaa- bonds in which each of the Xaa can be either Arg or Lys and Yaa can be either Ser or Ala.. It carries out the reaction RNA(n) + a ribonucleoside 5'-triphosphate = RNA(n+1) + diphosphate. It catalyses the reaction a ribonucleoside 5'-triphosphate + H2O = a ribonucleoside 5'-diphosphate + phosphate + H(+). The enzyme catalyses ATP + H2O = ADP + phosphate + H(+). The catalysed reaction is a 5'-end (5'-triphosphoguanosine)-ribonucleoside in mRNA + S-adenosyl-L-methionine = a 5'-end (N(7)-methyl 5'-triphosphoguanosine)-ribonucleoside in mRNA + S-adenosyl-L-homocysteine. It carries out the reaction a 5'-end (N(7)-methyl 5'-triphosphoguanosine)-ribonucleoside in mRNA + S-adenosyl-L-methionine = a 5'-end (N(7)-methyl 5'-triphosphoguanosine)-(2'-O-methyl-ribonucleoside) in mRNA + S-adenosyl-L-homocysteine + H(+). In terms of biological role, plays a role in virus budding by binding to the cell membrane and gathering the viral RNA into a nucleocapsid that forms the core of a mature virus particle. During virus entry, may induce genome penetration into the host cytoplasm after hemifusion induced by the surface proteins. Can migrate to the cell nucleus where it modulates host functions. Functionally, inhibits RNA silencing by interfering with host Dicer. Its function is as follows. Prevents premature fusion activity of envelope proteins in trans-Golgi by binding to envelope protein E at pH6.0. After virion release in extracellular space, gets dissociated from E dimers. Acts as a chaperone for envelope protein E during intracellular virion assembly by masking and inactivating envelope protein E fusion peptide. prM is the only viral peptide matured by host furin in the trans-Golgi network probably to avoid catastrophic activation of the viral fusion activity in acidic Golgi compartment prior to virion release. prM-E cleavage is inefficient, and many virions are only partially matured. These uncleaved prM would play a role in immune evasion. In terms of biological role, may play a role in virus budding. Exerts cytotoxic effects by activating a mitochondrial apoptotic pathway through M ectodomain. May display a viroporin activity. Functionally, binds to host cell surface receptor and mediates fusion between viral and cellular membranes. Envelope protein is synthesized in the endoplasmic reticulum in the form of heterodimer with protein prM. They play a role in virion budding in the ER, and the newly formed immature particle is covered with 60 spikes composed of heterodimer between precursor prM and envelope protein E. The virion is transported to the Golgi apparatus where the low pH causes dissociation of PrM-E heterodimers and formation of E homodimers. prM-E cleavage is inefficient, and many virions are only partially matured. These uncleaved prM would play a role in immune evasion. Its function is as follows. Involved in immune evasion, pathogenesis and viral replication. Once cleaved off the polyprotein, is targeted to three destinations: the viral replication cycle, the plasma membrane and the extracellular compartment. Essential for viral replication. Required for formation of the replication complex and recruitment of other non-structural proteins to the ER-derived membrane structures. Excreted as a hexameric lipoparticle that plays a role against host immune response. Antagonizing the complement function. Binds to the host macrophages and dendritic cells. Inhibits signal transduction originating from Toll-like receptor 3 (TLR3). Component of the viral RNA replication complex that functions in virion assembly and antagonizes the host immune response. In terms of biological role, required cofactor for the serine protease function of NS3. May have membrane-destabilizing activity and form viroporins. Functionally, displays three enzymatic activities: serine protease, NTPase and RNA helicase. NS3 serine protease, in association with NS2B, performs its autocleavage and cleaves the polyprotein at dibasic sites in the cytoplasm: C-prM, NS2A-NS2B, NS2B-NS3, NS3-NS4A, NS4A-2K and NS4B-NS5. NS3 RNA helicase binds RNA and unwinds dsRNA in the 3' to 5' direction. Its function is as follows. Regulates the ATPase activity of the NS3 helicase activity. NS4A allows NS3 helicase to conserve energy during unwinding. Functions as a signal peptide for NS4B and is required for the interferon antagonism activity of the latter. In terms of biological role, induces the formation of ER-derived membrane vesicles where the viral replication takes place. Inhibits interferon (IFN)-induced host STAT1 phosphorylation and nuclear translocation, thereby preventing the establishment of cellular antiviral state by blocking the IFN-alpha/beta pathway. Inhibits STAT2 translocation in the nucleus after IFN-alpha treatment. Functionally, replicates the viral (+) and (-) RNA genome, and performs the capping of genomes in the cytoplasm. NS5 methylates viral RNA cap at guanine N-7 and ribose 2'-O positions. Besides its role in RNA genome replication, also prevents the establishment of cellular antiviral state by blocking the interferon-alpha/beta (IFN-alpha/beta) signaling pathway. Inhibits host TYK2 and STAT2 phosphorylation, thereby preventing activation of JAK-STAT signaling pathway. In Homo sapiens (Human), this protein is Genome polyprotein.